The chain runs to 201 residues: Imidazole glycerol phosphate synthase subunit HisH (201 aa).

The 201-residue stretch at 1 to 201 folds into the Glutamine amidotransferase type-1 domain; the sequence is MIIVIDYDAG…ILKKFVDLCD (201 aa). Residue cysteine 79 is the Nucleophile of the active site. Residues histidine 181 and glutamate 183 contribute to the active site.

In terms of assembly, heterodimer of HisH and HisF.

It localises to the cytoplasm. The enzyme catalyses 5-[(5-phospho-1-deoxy-D-ribulos-1-ylimino)methylamino]-1-(5-phospho-beta-D-ribosyl)imidazole-4-carboxamide + L-glutamine = D-erythro-1-(imidazol-4-yl)glycerol 3-phosphate + 5-amino-1-(5-phospho-beta-D-ribosyl)imidazole-4-carboxamide + L-glutamate + H(+). The catalysed reaction is L-glutamine + H2O = L-glutamate + NH4(+). It participates in amino-acid biosynthesis; L-histidine biosynthesis; L-histidine from 5-phospho-alpha-D-ribose 1-diphosphate: step 5/9. Its function is as follows. IGPS catalyzes the conversion of PRFAR and glutamine to IGP, AICAR and glutamate. The HisH subunit catalyzes the hydrolysis of glutamine to glutamate and ammonia as part of the synthesis of IGP and AICAR. The resulting ammonia molecule is channeled to the active site of HisF. This chain is Imidazole glycerol phosphate synthase subunit HisH, found in Streptococcus mutans serotype c (strain ATCC 700610 / UA159).